A 741-amino-acid polypeptide reads, in one-letter code: Probable basic-leucine zipper transcription factor I (741 aa).

Positions glutamine 77–glutamine 117 form a coiled coil. Low complexity-rich tracts occupy residues glutamine 153 to glutamine 164, proline 172 to lysine 237, isoleucine 277 to lysine 290, and glutamine 381 to glutamine 390. Disordered stretches follow at residues glutamine 153 to lysine 237, isoleucine 277 to methionine 305, and lysine 349 to glutamine 390. A bZIP domain is found at glutamate 429–lysine 492. Residues lysine 431–lysine 432 form a basic motif region. The interval isoleucine 434–isoleucine 441 is leucine-zipper.

The protein belongs to the bZIP family.

The protein resides in the nucleus. Its function is as follows. Probable transcriptional regulator. In Dictyostelium discoideum (Social amoeba), this protein is Probable basic-leucine zipper transcription factor I (bzpI).